The sequence spans 635 residues: Biosynthetic arginine decarboxylase (635 aa).

N6-(pyridoxal phosphate)lysine is present on Lys101. Substrate is bound at residue 284–294 (VDVGGGLGVDY).

The protein belongs to the Orn/Lys/Arg decarboxylase class-II family. SpeA subfamily. Mg(2+) is required as a cofactor. Pyridoxal 5'-phosphate serves as cofactor.

It carries out the reaction L-arginine + H(+) = agmatine + CO2. It participates in amine and polyamine biosynthesis; agmatine biosynthesis; agmatine from L-arginine: step 1/1. Functionally, catalyzes the biosynthesis of agmatine from arginine. The polypeptide is Biosynthetic arginine decarboxylase (Tolumonas auensis (strain DSM 9187 / NBRC 110442 / TA 4)).